A 389-amino-acid chain; its full sequence is Lipid-A-disaccharide synthase (389 aa).

The protein belongs to the LpxB family.

The catalysed reaction is a lipid X + a UDP-2-N,3-O-bis[(3R)-3-hydroxyacyl]-alpha-D-glucosamine = a lipid A disaccharide + UDP + H(+). Its pathway is bacterial outer membrane biogenesis; LPS lipid A biosynthesis. Functionally, condensation of UDP-2,3-diacylglucosamine and 2,3-diacylglucosamine-1-phosphate to form lipid A disaccharide, a precursor of lipid A, a phosphorylated glycolipid that anchors the lipopolysaccharide to the outer membrane of the cell. This chain is Lipid-A-disaccharide synthase, found in Burkholderia multivorans (strain ATCC 17616 / 249).